Reading from the N-terminus, the 442-residue chain is Exodeoxyribonuclease 7 large subunit (442 aa).

It belongs to the XseA family. As to quaternary structure, heterooligomer composed of large and small subunits.

The protein localises to the cytoplasm. The enzyme catalyses Exonucleolytic cleavage in either 5'- to 3'- or 3'- to 5'-direction to yield nucleoside 5'-phosphates.. Bidirectionally degrades single-stranded DNA into large acid-insoluble oligonucleotides, which are then degraded further into small acid-soluble oligonucleotides. This is Exodeoxyribonuclease 7 large subunit from Rickettsia bellii (strain OSU 85-389).